Here is a 607-residue protein sequence, read N- to C-terminus: V-type proton ATPase catalytic subunit A (607 aa).

246–253 (GAFGCGKT) is a binding site for ATP.

It belongs to the ATPase alpha/beta chains family. V-ATPase is a heteromultimeric enzyme composed of a peripheral catalytic V1 complex (components A to H) attached to an integral membrane V0 proton pore complex (components: a, c, c', c'', d, e, f and VOA1).

It is found in the vacuole membrane. The enzyme catalyses ATP + H2O + 4 H(+)(in) = ADP + phosphate + 5 H(+)(out). Functionally, catalytic subunit of the V1 complex of vacuolar(H+)-ATPase (V-ATPase), a multisubunit enzyme composed of a peripheral complex (V1) that hydrolyzes ATP and a membrane integral complex (V0) that translocates protons. V-ATPase is responsible for acidifying and maintaining the pH of intracellular compartments. This Neurospora crassa (strain ATCC 24698 / 74-OR23-1A / CBS 708.71 / DSM 1257 / FGSC 987) protein is V-type proton ATPase catalytic subunit A (vma-1).